The sequence spans 267 residues: Undecaprenyl-diphosphatase 1 (267 aa).

The next 8 helical transmembrane spans lie at 6 to 26 (VLVVALIQGLGEVLPFGAAGL), 41 to 60 (AALSVAAHAGILLALMIYFW), 83 to 103 (HLLLHVLAGTIPAAIVGWLVL), 109 to 129 (LVGQSGAAIILILGGVLLWGC), 142 to 162 (MSWVGAAGLGALQILSLVPGV), 185 to 205 (FSMLLAMPLILGHGVKTFWGL), 217 to 237 (LLMAMATAGLAALIGLAGMMA), and 244 to 264 (FVPFAILRIGFGIAVLGLVYF).

This sequence belongs to the UppP family.

Its subcellular location is the cell inner membrane. It catalyses the reaction di-trans,octa-cis-undecaprenyl diphosphate + H2O = di-trans,octa-cis-undecaprenyl phosphate + phosphate + H(+). Its function is as follows. Catalyzes the dephosphorylation of undecaprenyl diphosphate (UPP). Confers resistance to bacitracin. This is Undecaprenyl-diphosphatase 1 from Paramagnetospirillum magneticum (strain ATCC 700264 / AMB-1) (Magnetospirillum magneticum).